The chain runs to 583 residues: MEVQSSSNNGGHSSFSSLRVYLNSLSATPSRLSRRAISVSTSSDEMSRVRAVSGEQMRRTLRWYDLIGLGIGGMVGAGVFVTTGRASRLDAGPSIVVSYAIAGLCALLSAFCYTEFAVHLPVAGGAFSYIRITFGEFPAFFTGANLVMDYVMSNAAVSRSFTAYLGTAFGISTSKWRFVVSGLPKGFNEIDPVAVLVVLVITVIICCSTRESSKVNMIMTAFHIAFIFFVIVMGFIKGDSKNLSSPANPEHPSGFFPFGAAGVFNGAAMVYLSYIGYDAVSTMAEEVENPVKDIPVGVSGSVAIVTVLYCLMAVSMSMLLPYDLIDPEAPFSAAFRGSNGWEWVTKVVGIGASFGILTSLLVAMLGQARYMCVIGRSRVVPFWFAKIHPKTSTPVNASTFLGIFTAALALFTDLNVLLNLVSIGTLFVFYMVANALIFRRYVPVGPTKPWPTLCFLTLFSITSLVFTLIWKLVPEGKPKAFMLGASAVVAIAIVLSFQCVVPQARKPELWGVPFMPWTPCVSIFLNIFLLGSLDAPSYVRFGFFSGLIVLVYLFYGVHASSDAEANGSFGVKDGQVMKELIEV.

A chloroplast-targeting transit peptide spans 1 to 50; sequence MEVQSSSNNGGHSSFSSLRVYLNSLSATPSRLSRRAISVSTSSDEMSRVR. The next 14 helical transmembrane spans lie at 63–83, 91–111, 132–152, 186–206, 216–236, 255–275, 294–314, 347–367, 397–417, 418–438, 450–470, 481–501, 509–529, and 541–561; these read WYDLIGLGIGGMVGAGVFVTT, AGPSIVVSYAIAGLCALLSAF, ITFGEFPAFFTGANLVMDYVM, GFNEIDPVAVLVVLVITVIIC, NMIMTAFHIAFIFFVIVMGFI, FFPFGAAGVFNGAAMVYLSYI, IPVGVSGSVAIVTVLYCLMAV, VVGIGASFGILTSLLVAMLGQ, ASTFLGIFTAALALFTDLNVL, LNLVSIGTLFVFYMVANALIF, WPTLCFLTLFSITSLVFTLIW, FMLGASAVVAIAIVLSFQCVV, LWGVPFMPWTPCVSIFLNIFL, and FGFFSGLIVLVYLFYGVHASS.

This sequence belongs to the amino acid-polyamine-organocation (APC) superfamily. Cationic amino acid transporter (CAT) (TC 2.A.3.3) family. Expressed in roots, stems, flowers, and leaves.

The protein localises to the plastid. The protein resides in the chloroplast membrane. Permease involved in the transport of the cationic neutral or acidic amino acids. In Arabidopsis thaliana (Mouse-ear cress), this protein is Cationic amino acid transporter 6, chloroplastic (CAT6).